A 377-amino-acid chain; its full sequence is 3-dehydroquinate synthase (377 aa).

Residues 113-117 (GVIGD), 137-138 (TT), lysine 150, and lysine 159 each bind NAD(+). Zn(2+) is bound by residues glutamate 192, histidine 254, and histidine 273.

The protein belongs to the sugar phosphate cyclases superfamily. Dehydroquinate synthase family. Requires Co(2+) as cofactor. Zn(2+) serves as cofactor. It depends on NAD(+) as a cofactor.

Its subcellular location is the cytoplasm. It catalyses the reaction 7-phospho-2-dehydro-3-deoxy-D-arabino-heptonate = 3-dehydroquinate + phosphate. The protein operates within metabolic intermediate biosynthesis; chorismate biosynthesis; chorismate from D-erythrose 4-phosphate and phosphoenolpyruvate: step 2/7. Catalyzes the conversion of 3-deoxy-D-arabino-heptulosonate 7-phosphate (DAHP) to dehydroquinate (DHQ). This Bartonella tribocorum (strain CIP 105476 / IBS 506) protein is 3-dehydroquinate synthase.